We begin with the raw amino-acid sequence, 228 residues long: 2,3-bisphosphoglycerate-dependent phosphoglycerate mutase (228 aa).

Substrate is bound by residues 8–15 (RHGLSEWN), 21–22 (TG), R60, 87–90 (ERHY), K98, 114–115 (RR), and 183–184 (GN). Catalysis depends on H9, which acts as the Tele-phosphohistidine intermediate. Residue E87 is the Proton donor/acceptor of the active site.

It belongs to the phosphoglycerate mutase family. BPG-dependent PGAM subfamily.

The enzyme catalyses (2R)-2-phosphoglycerate = (2R)-3-phosphoglycerate. The protein operates within carbohydrate degradation; glycolysis; pyruvate from D-glyceraldehyde 3-phosphate: step 3/5. Functionally, catalyzes the interconversion of 2-phosphoglycerate and 3-phosphoglycerate. This chain is 2,3-bisphosphoglycerate-dependent phosphoglycerate mutase, found in Enterococcus faecalis (strain ATCC 700802 / V583).